We begin with the raw amino-acid sequence, 794 residues long: DNA mismatch repair protein pms1 (794 aa).

Disordered stretches follow at residues 351–384 (SQIP…SFSY) and 409–442 (GASL…TASS). Residues 352–371 (QIPDSSGDSTDQELPQSIPA) are compositionally biased toward polar residues. Residues 419–429 (LPERLQKDSMR) show a composition bias toward basic and acidic residues. The span at 430–442 (RSSPLNEKVTASS) shows a compositional bias: polar residues.

It belongs to the DNA mismatch repair MutL/HexB family.

Functionally, this protein is involved in the repair of mismatches in DNA. This chain is DNA mismatch repair protein pms1 (pms1), found in Schizosaccharomyces pombe (strain 972 / ATCC 24843) (Fission yeast).